The chain runs to 417 residues: Exodeoxyribonuclease 7 large subunit (417 aa).

It belongs to the XseA family. As to quaternary structure, heterooligomer composed of large and small subunits.

It localises to the cytoplasm. The enzyme catalyses Exonucleolytic cleavage in either 5'- to 3'- or 3'- to 5'-direction to yield nucleoside 5'-phosphates.. Its function is as follows. Bidirectionally degrades single-stranded DNA into large acid-insoluble oligonucleotides, which are then degraded further into small acid-soluble oligonucleotides. This chain is Exodeoxyribonuclease 7 large subunit, found in Helicobacter hepaticus (strain ATCC 51449 / 3B1).